Consider the following 145-residue polypeptide: D-aminoacyl-tRNA deacylase (145 aa).

The Gly-cisPro motif, important for rejection of L-amino acids signature appears at 137–138 (GP).

This sequence belongs to the DTD family. In terms of assembly, homodimer.

The protein localises to the cytoplasm. It catalyses the reaction glycyl-tRNA(Ala) + H2O = tRNA(Ala) + glycine + H(+). It carries out the reaction a D-aminoacyl-tRNA + H2O = a tRNA + a D-alpha-amino acid + H(+). An aminoacyl-tRNA editing enzyme that deacylates mischarged D-aminoacyl-tRNAs. Also deacylates mischarged glycyl-tRNA(Ala), protecting cells against glycine mischarging by AlaRS. Acts via tRNA-based rather than protein-based catalysis; rejects L-amino acids rather than detecting D-amino acids in the active site. By recycling D-aminoacyl-tRNA to D-amino acids and free tRNA molecules, this enzyme counteracts the toxicity associated with the formation of D-aminoacyl-tRNA entities in vivo and helps enforce protein L-homochirality. This Saccharophagus degradans (strain 2-40 / ATCC 43961 / DSM 17024) protein is D-aminoacyl-tRNA deacylase.